Here is a 510-residue protein sequence, read N- to C-terminus: uncharacterized protein (510 aa).

It belongs to the phage portal family. PBSX subfamily.

This is an uncharacterized protein from Bacillus subtilis (strain 168).